A 1058-amino-acid chain; its full sequence is Kinesin-like protein KIN-5D (1058 aa).

A disordered region spans residues 1–43; the sequence is MDSIQQRRGGIVSLSPAQTPRSSDKSARESRSSESNSTNRNDK. Residues 22–32 are compositionally biased toward basic and acidic residues; sequence SSDKSARESRS. In terms of domain architecture, Kinesin motor spans 48-390; sequence NVQVILRCRP…LDYAHRAKNI (343 aa). 134–141 provides a ligand contact to ATP; that stretch reads GQTGTGKT. A coiled-coil region spans residues 438-517; that stretch reads QEEAEKKAMA…QANATIKEKE (80 aa).

It belongs to the TRAFAC class myosin-kinesin ATPase superfamily. Kinesin family. KIN-5/BimC subfamily.

It localises to the cytoplasm. The protein localises to the cytoskeleton. The protein resides in the spindle. Responsible for microtubule translocation. May be important for the organization of phragmoplast-specific arrays of microtubules. Plays an essential role in stabilizing the mitotic spindle. Required during mitotic cytokinesis. The sequence is that of Kinesin-like protein KIN-5D from Arabidopsis thaliana (Mouse-ear cress).